We begin with the raw amino-acid sequence, 150 residues long: MINNVVLVGRLTRDPELRHTPQNQAVGTFGLAVNRQFKNANGEREADFINCVIWRQQAENLAKFAKKGALIGITGRIQTRNYENQQGQKVYVTEVVADTFQMLESNKTQGQQTSKPQAQNKKPQAPDPFKAPAADPFAGGTEISDDDLPF.

The SSB domain maps to 1–104 (MINNVVLVGR…VVADTFQMLE (104 aa)). Residues 103–120 (LESNKTQGQQTSKPQAQN) show a composition bias toward polar residues. A disordered region spans residues 103-150 (LESNKTQGQQTSKPQAQNKKPQAPDPFKAPAADPFAGGTEISDDDLPF). Positions 121–138 (KKPQAPDPFKAPAADPFA) are enriched in low complexity. Residues 145-150 (DDDLPF) carry the Important for interaction with partner proteins motif.

Homotetramer.

Functionally, plays an important role in DNA replication, recombination and repair. Binds to ssDNA and to an array of partner proteins to recruit them to their sites of action during DNA metabolism. This chain is Single-stranded DNA-binding protein 1 (ssb1), found in Lactococcus lactis subsp. lactis (strain IL1403) (Streptococcus lactis).